Reading from the N-terminus, the 216-residue chain is Gamma-glutamylcyclotransferase 2-1 (216 aa).

Residue 5 to 10 participates in substrate binding; that stretch reads VFGYGS. Glu-87 acts as the Proton acceptor in catalysis.

The protein belongs to the gamma-glutamylcyclotransferase family. Requires Mn(2+) as cofactor. In terms of tissue distribution, expressed in the central vascular bundle of roots, leaf veins, hydathodes, cauline leaves, shoot apex, sepal veins, flower receptacles and developing seeds.

It localises to the cytoplasm. It catalyses the reaction an alpha-(gamma-L-glutamyl)-L-amino acid = 5-oxo-L-proline + an L-alpha-amino acid. Its function is as follows. Catalyzes the formation of 5-oxoproline from gamma-glutamyl dipeptides and plays a significant role in glutathione (GSH) homeostasis. Converts both GSH and gamma-glutamyl-L-alanine to 5-oxoproline in vitro. Plays a role in detoxification of heavy metals and metalloids by recycling glutamate and maintaining GSH homeostasis. This is Gamma-glutamylcyclotransferase 2-1 from Arabidopsis thaliana (Mouse-ear cress).